A 243-amino-acid polypeptide reads, in one-letter code: Proteasome subunit beta (243 aa).

Residues 1–49 constitute a propeptide, removed in mature form; by autocatalysis; that stretch reads MRTPTGDLSDGPAEELGRDQPVFGPEIGEFEHSERRAAQADGEGEMKTG. Positions 1-50 are disordered; that stretch reads MRTPTGDLSDGPAEELGRDQPVFGPEIGEFEHSERRAAQADGEGEMKTGT. A compositionally biased stretch (basic and acidic residues) spans 29-38; it reads EFEHSERRAA. The active-site Nucleophile is Thr-50.

Belongs to the peptidase T1B family. As to quaternary structure, the 20S proteasome core is composed of 14 alpha and 14 beta subunits that assemble into four stacked heptameric rings, resulting in a barrel-shaped structure. The two inner rings, each composed of seven catalytic beta subunits, are sandwiched by two outer rings, each composed of seven alpha subunits. The catalytic chamber with the active sites is on the inside of the barrel. Has a gated structure, the ends of the cylinder being occluded by the N-termini of the alpha-subunits. Is capped at one or both ends by the proteasome regulatory ATPase, PAN.

Its subcellular location is the cytoplasm. The catalysed reaction is Cleavage of peptide bonds with very broad specificity.. With respect to regulation, the formation of the proteasomal ATPase PAN-20S proteasome complex, via the docking of the C-termini of PAN into the intersubunit pockets in the alpha-rings, triggers opening of the gate for substrate entry. Interconversion between the open-gate and close-gate conformations leads to a dynamic regulation of the 20S proteasome proteolysis activity. In terms of biological role, component of the proteasome core, a large protease complex with broad specificity involved in protein degradation. The polypeptide is Proteasome subunit beta (Halorubrum lacusprofundi (strain ATCC 49239 / DSM 5036 / JCM 8891 / ACAM 34)).